A 102-amino-acid chain; its full sequence is Class I hydrophobin 1 (102 aa).

The signal sequence occupies residues 1–18 (MSLFKILVAAATVATALA). Disulfide bonds link C37-C84, C45-C78, C46-C63, and C85-C97.

Belongs to the fungal hydrophobin family.

It is found in the secreted. The protein resides in the cell wall. In terms of biological role, aerial growth, conidiation, and dispersal of filamentous fungi in the environment rely upon a capability of their secreting small amphipathic proteins called hydrophobins (HPBs) with low sequence identity. Class I can self-assemble into an outermost layer of rodlet bundles on aerial cell surfaces, conferring cellular hydrophobicity that supports fungal growth, development and dispersal; whereas Class II form highly ordered films at water-air interfaces through intermolecular interactions but contribute nothing to the rodlet structure. Hyd1 is essential for stress tolerance, conidial hydrophobicity, adhesion to insect cuticle, and insect infectivity/pathogenicity. Plays a neglectable role in hyphal growth and asexual development. The protein is Class I hydrophobin 1 of Metarhizium robertsii (strain ARSEF 23 / ATCC MYA-3075) (Metarhizium anisopliae (strain ARSEF 23)).